Here is a 591-residue protein sequence, read N- to C-terminus: L-fucose isomerase (591 aa).

Active-site proton acceptor residues include glutamate 337 and aspartate 361. Mn(2+) is bound by residues glutamate 337, aspartate 361, and histidine 528.

It belongs to the L-fucose isomerase family. In terms of assembly, homohexamer. Mn(2+) is required as a cofactor.

It localises to the cytoplasm. The catalysed reaction is L-fucose = L-fuculose. The protein operates within carbohydrate degradation; L-fucose degradation; L-lactaldehyde and glycerone phosphate from L-fucose: step 1/3. Converts the aldose L-fucose into the corresponding ketose L-fuculose. In Salmonella paratyphi B (strain ATCC BAA-1250 / SPB7), this protein is L-fucose isomerase.